Reading from the N-terminus, the 120-residue chain is Small ribosomal subunit protein uS13 (120 aa).

The tract at residues 92–120 (RRGLPCRGQRTRTNARTRKGPRKPIAGKK) is disordered.

This sequence belongs to the universal ribosomal protein uS13 family. Part of the 30S ribosomal subunit. Forms a loose heterodimer with protein S19. Forms two bridges to the 50S subunit in the 70S ribosome.

Its function is as follows. Located at the top of the head of the 30S subunit, it contacts several helices of the 16S rRNA. In the 70S ribosome it contacts the 23S rRNA (bridge B1a) and protein L5 of the 50S subunit (bridge B1b), connecting the 2 subunits; these bridges are implicated in subunit movement. Contacts the tRNAs in the A and P-sites. The sequence is that of Small ribosomal subunit protein uS13 from Laribacter hongkongensis (strain HLHK9).